Reading from the N-terminus, the 1206-residue chain is Pre-mRNA-splicing factor prp12 (1206 aa).

Belongs to the RSE1 family. As to quaternary structure, belongs to the 40S cdc5-associated complex (or cwf complex), a spliceosome sub-complex reminiscent of a late-stage spliceosome composed of the U2, U5 and U6 snRNAs and at least brr2, cdc5, cwf2/prp3, cwf3/syf1, cwf4/syf3, cwf5/ecm2, spp42/cwf6, cwf7/spf27, cwf8, cwf9, cwf10, cwf11, cwf12, prp45/cwf13, cwf14, cwf15, cwf16, cwf17, cwf18, cwf19, cwf20, cwf21, cwf22, cwf23, cwf24, cwf25, cwf26, cyp7/cwf27, cwf28, cwf29/ist3, lea1, msl1, prp5/cwf1, prp10, prp12/sap130, prp17, prp22, sap61, sap62, sap114, sap145, slu7, smb1, smd1, smd3, smf1, smg1 and syf2.

The protein resides in the nucleus. Its function is as follows. Involved in mRNA splicing and G2/M transition. The polypeptide is Pre-mRNA-splicing factor prp12 (prp12) (Schizosaccharomyces pombe (strain 972 / ATCC 24843) (Fission yeast)).